The chain runs to 311 residues: Ribose-phosphate pyrophosphokinase (311 aa).

ATP is bound by residues 37 to 39 (DGE) and 96 to 97 (RQ). His-130 and Asp-170 together coordinate Mg(2+). Lys-193 is an active-site residue. Residues Arg-195, Asp-219, and 223-227 (DTAGT) each bind D-ribose 5-phosphate.

Belongs to the ribose-phosphate pyrophosphokinase family. Class I subfamily. Homohexamer. Mg(2+) serves as cofactor.

The protein localises to the cytoplasm. It catalyses the reaction D-ribose 5-phosphate + ATP = 5-phospho-alpha-D-ribose 1-diphosphate + AMP + H(+). Its pathway is metabolic intermediate biosynthesis; 5-phospho-alpha-D-ribose 1-diphosphate biosynthesis; 5-phospho-alpha-D-ribose 1-diphosphate from D-ribose 5-phosphate (route I): step 1/1. Functionally, involved in the biosynthesis of the central metabolite phospho-alpha-D-ribosyl-1-pyrophosphate (PRPP) via the transfer of pyrophosphoryl group from ATP to 1-hydroxyl of ribose-5-phosphate (Rib-5-P). The polypeptide is Ribose-phosphate pyrophosphokinase (Aquifex aeolicus (strain VF5)).